The primary structure comprises 184 residues: MADDQLNEKDLNAEEAAAVDNGARVQELEEQLAAAKDQSLRVAAEAQNSIRRAEQEVDKARKFALEKFSSDLLPVIDSLELALAHSSADDEHVKQIREGVELTLKMFQDTLKRYNLEAVDPHGQPFNPEHHQAMAMQENAEVEPNSVLNVFQKGYLLNGRLLRPAMVVVSKAPAAPQPSIDEKA.

The protein belongs to the GrpE family. As to quaternary structure, homodimer.

It localises to the cytoplasm. Participates actively in the response to hyperosmotic and heat shock by preventing the aggregation of stress-denatured proteins, in association with DnaK and GrpE. It is the nucleotide exchange factor for DnaK and may function as a thermosensor. Unfolded proteins bind initially to DnaJ; upon interaction with the DnaJ-bound protein, DnaK hydrolyzes its bound ATP, resulting in the formation of a stable complex. GrpE releases ADP from DnaK; ATP binding to DnaK triggers the release of the substrate protein, thus completing the reaction cycle. Several rounds of ATP-dependent interactions between DnaJ, DnaK and GrpE are required for fully efficient folding. This is Protein GrpE from Pseudomonas putida (strain GB-1).